We begin with the raw amino-acid sequence, 326 residues long: G-protein coupled receptor 1 (326 aa).

The residue at position 2 (Ser-2) is an N-acetylserine. At 2 to 23 (SAVLTAGGGLTAGDRSIITAIN) the chain is on the extracellular side. The helical transmembrane segment at 24-44 (TGASSLSFVGSAFIVLCYCLF) threads the bilayer. Residues 45-51 (KELRKFS) lie on the Cytoplasmic side of the membrane. Residues 52-72 (FKLVFYLALSDMLCSFFLIVG) traverse the membrane as a helical segment. At 73–84 (DPSKGFICYAQG) the chain is on the extracellular side. A disulfide bridge links Cys-80 with Cys-151. A helical membrane pass occupies residues 85 to 105 (YTTHFFCVASFLWTTTIAFTL). Topologically, residues 106 to 120 (HRTVVKHKTDVEDLE) are cytoplasmic. A helical transmembrane segment spans residues 121 to 141 (AMFHLYVWGTSLVVTVIRSFG). The Extracellular portion of the chain corresponds to 142–160 (NNHSHLGPWCWTQTGLKGK). The N-linked (GlcNAc...) asparagine glycan is linked to Asn-143. A helical membrane pass occupies residues 161 to 181 (AVHFLTFYAPLWGAILYNGFT). The Cytoplasmic segment spans residues 182-213 (YFQVIRMLRNARRMAVGMSDRVDQFDNRAELK). The chain crosses the membrane as a helical span at residues 214–234 (VLNRWGYYPLILIGSWAFGTI). Residues 235-246 (NRIHDFIEPGHK) lie on the Extracellular side of the membrane. Residues 247-267 (IFWLSVLDVGTAALMGLFNSI) traverse the membrane as a helical segment. The Cytoplasmic segment spans residues 268-326 (AYGFNSSVRRAIHERLELFLPERLYRWLPSNFRPKNHLILHQQQQQRSEMVSLKTEDQQ).

It belongs to the G-protein coupled receptor 2 family. In terms of assembly, interacts with GPA1. Mostly present in the meristematic regions. Expressed at low levels in seedlings, vascular tissues of cotyledons, hypocotyl, and roots, stems, leaves, flowering buds and siliques. In dark-grown seedlings, localized in the cotyledons and the hook.

Its subcellular location is the cell membrane. Together with GPA1, may regulate the cell cycle via a signaling cascade that uses phosphatidylinositol-specific phospholipase C (PI-PLC) as an effector and inositol 1,4,5-trisphosphate(IP(3)) as a second messenger. Promotes PI-PLC activity and IP(3) accumulation. Involved in the blue light (BL) signaling. Together with GPA1 and ADT3, required for BL-mediated synthesis of phenylpyruvate and subsequently of phenylalanine (Phe), in etiolated seedlings. Probably involved in cytokinin signal transduction. Plays a positive role in gibberellin- (GA) and brassinosteroid- (BR) regulated seed germination, probably independently of a heterotrimeric G-protein. Mediates seed dormancy abolition, and promotes seed germination and flowering. The polypeptide is G-protein coupled receptor 1 (GCR1) (Arabidopsis thaliana (Mouse-ear cress)).